We begin with the raw amino-acid sequence, 430 residues long: MSTVVLVGAQWGDEGKGKLTDYLAREADLVVRYQGGNNAGHTVVVEGQEFKLHLIPSGILHPDKVCVIGNGVVIDPGVLHRELEMLRAAGRPLAALYISERAHVIMPYHRQCDELEEDCPESLRRIGTTRRGIGPAYADKYAREGLRVVDLLEAGAEERLKLIIRRKGEILGRIHRAPAPDPERVAQEYLDHAEMLRPFVRDTSLLVHEAVRAGRNVLFEGAQGTLLDIDHGTYPYVTSSNPTAGGAAVGTGIGPRVIDTVIGVTKAYTTRVGDGPFPTELKDETGEHLRAAGREYGTTTGRPRRCGWLDTVITRYAARVNSLDYLAVTKLDVLTGLPVLRICRAYRYQGREIHDFPSRLSVLAGCEPVYEELPGWTEDLTGVRSFEELPAAARAYLDRLAELSGVPLGVVSVGPGREQTLPLADFFHRR.

GTP is bound by residues 12 to 18 (GDEGKGK) and 40 to 42 (GHT). The Proton acceptor role is filled by Asp-13. 2 residues coordinate Mg(2+): Asp-13 and Gly-40. IMP contacts are provided by residues 13–16 (DEGK), 38–41 (NAGH), Thr-129, Arg-143, Gln-223, Thr-238, and Arg-302. His-41 acts as the Proton donor in catalysis. Position 298 to 304 (298 to 304 (TTTGRPR)) interacts with substrate. Residues Arg-304, 330–332 (KLD), and 412–414 (SVG) contribute to the GTP site.

The protein belongs to the adenylosuccinate synthetase family. Homodimer. The cofactor is Mg(2+).

It localises to the cytoplasm. It carries out the reaction IMP + L-aspartate + GTP = N(6)-(1,2-dicarboxyethyl)-AMP + GDP + phosphate + 2 H(+). The protein operates within purine metabolism; AMP biosynthesis via de novo pathway; AMP from IMP: step 1/2. In terms of biological role, plays an important role in the de novo pathway of purine nucleotide biosynthesis. Catalyzes the first committed step in the biosynthesis of AMP from IMP. The chain is Adenylosuccinate synthetase from Desulforudis audaxviator (strain MP104C).